The sequence spans 179 residues: Macro domain-containing protein XCC3184 (179 aa).

Residues methionine 1–glutamate 175 enclose the Macro domain.

Belongs to the MacroD-type family.

In Xanthomonas campestris pv. campestris (strain ATCC 33913 / DSM 3586 / NCPPB 528 / LMG 568 / P 25), this protein is Macro domain-containing protein XCC3184.